A 295-amino-acid polypeptide reads, in one-letter code: Probable peptidyl-prolyl cis-trans isomerase B (295 aa).

Disordered regions lie at residues 105–128 (SADK…PATV) and 274–295 (IASG…LRLD). The 169-residue stretch at 126–294 (ATVSASMATN…TEVTIESLRL (169 aa)) folds into the PPIase cyclophilin-type domain.

Belongs to the cyclophilin-type PPIase family.

The catalysed reaction is [protein]-peptidylproline (omega=180) = [protein]-peptidylproline (omega=0). Its function is as follows. PPIases accelerate the folding of proteins. It catalyzes the cis-trans isomerization of proline imidic peptide bonds in oligopeptides. This Mycobacterium leprae (strain TN) protein is Probable peptidyl-prolyl cis-trans isomerase B (ppiB).